The chain runs to 541 residues: MFQDKGWILVTLITLVTPSWAAYKLQERYSWNQLDFAFPNTRLKDQALASGDYIPQNALPVGVEHFGNRLFVTVPRWRDGIPATLTYINMDRSLTGSPELIPYPDWRSNTAGDCANSITTAYRIKVDECGRLWVLDTGTVGIGNTTTNPCPYAVNVFDLTTDTRIRRYELPGVDTNPNTFIANIAVDIGKNCDDAYAYFADELGYGLIAYSWELNKSWRFSAHSYFFPDPLRGDFNVAGINFQWGEEGIFGMSLSPIRSDGYRTLYFSPLASHRQFAVSTRILRDETRTEDSYHDFVALDERGPNSHTTSRVMSDDGIELFNLIDQNAVGCWHSSMPYSPQFHGIVDRDDVGLVFPADVKIDENKNVWVLSDRMPVFLLSDLDYSDTNFRIYTAPLATLIENTVCDLRNNAYGPPNTVSIPKQAVLPMGPPLYTKQYRPLLPQKPQTSWASSPPPPSRTYLPANSGNVVSSISVSTNSVGPAGVEVPKAYIFNQHNGINYETSGPHLFPTHQPAQPGVQDGGLKTYVNARQSGWWHHQHQG.

The N-terminal stretch at 1 to 21 (MFQDKGWILVTLITLVTPSWA) is a signal peptide. N-linked (GlcNAc...) asparagine glycosylation is found at Asn-144 and Asn-215. The interval 443 to 463 (QKPQTSWASSPPPPSRTYLPA) is disordered.

Belongs to the major royal jelly protein family.

The protein localises to the secreted. Its function is as follows. Controls the pigmentation pattern of the adult cuticle and larval mouth parts. The protein is Protein yellow (y) of Drosophila mauritiana (Fruit fly).